A 101-amino-acid chain; its full sequence is Secreted enzymes activator (101 aa).

The segment covering 1-10 (MSRRRRRASA) has biased composition (basic residues). 2 disordered regions span residues 1–26 (MSRRRRRASATRRSAAVSPPHTPYGS) and 45–101 (TRLA…NGRG). The segment covering 45–60 (TRLAASSRASRAAVGS) has biased composition (low complexity). Residues 55–74 (RAAVGSFDGAKNRPASSRRQ) constitute a DNA-binding region (H-T-H motif).

Its function is as follows. Increases the production of several extracellular enzymes, like alkaline phosphatase, amylase, protease or lipase. When present in high concentrations, delays the production of pigments and sporulation. The protein is Secreted enzymes activator (saf) of Streptomyces griseus.